We begin with the raw amino-acid sequence, 438 residues long: MTRTLLKIYTLFILLLCRQRDANRKLLVFLIDGFRHDYMDDLHNLPGFREIVENGVKVDYLTPDFPSLSYPNYYSLMTGRHCEVHQMTGNYMWDTDTQKEFLIGTNPDSRLPMWWDGSEPLWVTMQKLGKKVYMYYWPGCEVTILGVRPTFCEEYVYNPSEKNLTDSMENALNALKSSKADMAGIYYEKIDVEGHHFGPRSPEIQRAIRSLDQAFQILNQKIREKNMRDTINVVLFSDHGMTQLKWMEKIIELDNYINMSHIIKMMDRGPVVSLWPKQDKFEEIYQNLSTADNMNVYKKHEIPDRFHYKNGQFVSTLTLVAEPGWFITENKAKLPFWNNGTEAAGGWQHGWHGYDNEFVDMRGSFLAQGPDFKSNYRAGPIRTVDVYNVLCKTLGMNPLPNNGSWSRVECMMRSSAATAGASLISCCFLLLLTLTGVC.

The signal sequence occupies residues 1 to 22 (MTRTLLKIYTLFILLLCRQRDA). Residues Asp32, Ser69, and Asn90 each contribute to the substrate site. Positions 32 and 69 each coordinate Zn(2+). Ser69 functions as the Nucleophile in the catalytic mechanism. Position 69 is a phosphoserine (Ser69). Cys140 and Cys152 form a disulfide bridge. Positions 162 to 226 (KNLTDSMENA…ILNQKIREKN (65 aa)) form a coiled coil. An N-linked (GlcNAc...) asparagine glycan is attached at Asn163. Asp191 contacts substrate. 4 residues coordinate Zn(2+): Asp191, His195, Asp238, and His239. His239 is a binding site for substrate. 3 N-linked (GlcNAc...) asparagine glycosylation sites follow: Asn258, Asn287, and Asn339. Position 352 (His352) interacts with substrate. Residue His352 participates in Zn(2+) binding. An N-linked (GlcNAc...) asparagine glycan is attached at Asn402. Residue Ser415 is the site of GPI-anchor amidated serine attachment. Residues 416-438 (AATAGASLISCCFLLLLTLTGVC) constitute a propeptide, removed in mature form.

The protein belongs to the nucleotide pyrophosphatase/phosphodiesterase family. It depends on Zn(2+) as a cofactor.

It localises to the cell membrane. The enzyme catalyses sn-glycerol 3-phosphocholine + H2O = phosphocholine + glycerol + H(+). It carries out the reaction a 1-acyl-sn-glycero-3-phosphocholine + H2O = a 1-acyl-sn-glycerol + phosphocholine + H(+). The catalysed reaction is a 1-O-alkyl-sn-glycero-3-phosphocholine + H2O = a 1-O-alkyl-sn-glycerol + phosphocholine + H(+). It catalyses the reaction 1-dodecanoyl-sn-glycero-3-phosphocholine + H2O = 1-dodecanoyl-sn-glycerol + phosphocholine + H(+). The enzyme catalyses 1-hexadecanoyl-sn-glycero-3-phosphocholine + H2O = 1-hexadecanoyl-sn-glycerol + phosphocholine + H(+). It carries out the reaction 1-(5Z,8Z,11Z,14Z-eicosatetraenoyl)-sn-glycero-3-phosphocholine + H2O = 1-(5Z,8Z,11Z,14Z-eicosatetraenoyl)-sn-glycerol + phosphocholine + H(+). The catalysed reaction is 1-tetradecanoyl-sn-glycero-3-phosphocholine + H2O = 1-tetradecanoyl-sn-glycerol + phosphocholine + H(+). It catalyses the reaction sphing-4-enine-phosphocholine + H2O = sphing-4-enine + phosphocholine + H(+). The enzyme catalyses 1-(9Z-octadecenoyl)-sn-glycero-3-phosphocholine + H2O = 1-(9Z-octadecenoyl)-sn-glycerol + phosphocholine + H(+). It carries out the reaction 1-(9Z,12Z)-octadecadienoyl-sn-glycero-3-phosphocholine + H2O = 1-(9Z,12Z-octadecadienoyl)-sn-glycerol + phosphocholine + H(+). The catalysed reaction is glycero-2-phosphocholine + H2O = phosphocholine + glycerol + H(+). Its function is as follows. Choline-specific glycerophosphodiesterase that hydrolyzes glycerophosphocholine (GPC) and lysophosphatidylcholine (LPC) and contributes to supplying choline to the cells. Has a preference for LPC with short (12:0 and 14:0) or polyunsaturated (18:2 and 20:4) fatty acids. In vitro, hydrolyzes only choline-containing lysophospholipids, such as sphingosylphosphorylcholine (SPC), platelet-activating factor (PAF) and lysoPAF, but not other lysophospholipids. The sequence is that of Glycerophosphocholine cholinephosphodiesterase ENPP6 from Danio rerio (Zebrafish).